Reading from the N-terminus, the 314-residue chain is tRNA pseudouridine synthase B (314 aa).

His-43 lines the substrate pocket. Asp-48 acts as the Nucleophile in catalysis. Tyr-76, Tyr-179, and Leu-200 together coordinate substrate.

This sequence belongs to the pseudouridine synthase TruB family. Type 1 subfamily.

The enzyme catalyses uridine(55) in tRNA = pseudouridine(55) in tRNA. Functionally, responsible for synthesis of pseudouridine from uracil-55 in the psi GC loop of transfer RNAs. This Enterobacter sp. (strain 638) protein is tRNA pseudouridine synthase B.